The chain runs to 361 residues: Phosphoserine aminotransferase (361 aa).

Positions 9 and 42 each coordinate L-glutamate. Residues Gly76 to Arg77, Trp102, Thr153, Asp173, and Gln196 each bind pyridoxal 5'-phosphate. Lys197 bears the N6-(pyridoxal phosphate)lysine mark. Residue Asn238 to Thr239 coordinates pyridoxal 5'-phosphate.

The protein belongs to the class-V pyridoxal-phosphate-dependent aminotransferase family. SerC subfamily. In terms of assembly, homodimer. It depends on pyridoxal 5'-phosphate as a cofactor.

The protein resides in the cytoplasm. It carries out the reaction O-phospho-L-serine + 2-oxoglutarate = 3-phosphooxypyruvate + L-glutamate. The enzyme catalyses 4-(phosphooxy)-L-threonine + 2-oxoglutarate = (R)-3-hydroxy-2-oxo-4-phosphooxybutanoate + L-glutamate. The protein operates within amino-acid biosynthesis; L-serine biosynthesis; L-serine from 3-phospho-D-glycerate: step 2/3. It participates in cofactor biosynthesis; pyridoxine 5'-phosphate biosynthesis; pyridoxine 5'-phosphate from D-erythrose 4-phosphate: step 3/5. Catalyzes the reversible conversion of 3-phosphohydroxypyruvate to phosphoserine and of 3-hydroxy-2-oxo-4-phosphonooxybutanoate to phosphohydroxythreonine. The sequence is that of Phosphoserine aminotransferase from Cronobacter sakazakii (strain ATCC BAA-894) (Enterobacter sakazakii).